Reading from the N-terminus, the 328-residue chain is D-cysteine desulfhydrase (328 aa).

Lys-51 is modified (N6-(pyridoxal phosphate)lysine).

The protein belongs to the ACC deaminase/D-cysteine desulfhydrase family. In terms of assembly, homodimer. Pyridoxal 5'-phosphate is required as a cofactor.

The enzyme catalyses D-cysteine + H2O = hydrogen sulfide + pyruvate + NH4(+) + H(+). Functionally, catalyzes the alpha,beta-elimination reaction of D-cysteine and of several D-cysteine derivatives. It could be a defense mechanism against D-cysteine. The chain is D-cysteine desulfhydrase from Escherichia coli O7:K1 (strain IAI39 / ExPEC).